A 76-amino-acid chain; its full sequence is Conotoxin Bu28 (76 aa).

A signal peptide spans M1–P24. Positions D25–R39 are excised as a propeptide. 2 cysteine pairs are disulfide-bonded: C50/C63 and C54/C65. At R69 the chain carries Arginine amide. A propeptide spanning residues V71–I76 is cleaved from the precursor.

Belongs to the conotoxin J superfamily. As to expression, expressed by the venom duct.

The protein localises to the secreted. In terms of biological role, highly inhibits both nicotinic acetylcholine receptors (neuronal (alpha-3/beta-4) and muscular (alpha-1/beta-1/epsilon/delta) subtypes) and the voltage-gated potassium channel Kv1.6/KCNA6 subtype. The chain is Conotoxin Bu28 from Conus bullatus (Bubble cone).